The chain runs to 225 residues: Redox-sensing transcriptional repressor Rex (225 aa).

Residues 16 to 55 constitute a DNA-binding region (H-T-H motif); it reads IYYRYLNILLDADKKRVSSTELSEAVKVDSATIRRDFSYF. An NAD(+)-binding site is contributed by 90–95; sequence GVGNLG.

Belongs to the transcriptional regulatory Rex family. Homodimer.

The protein resides in the cytoplasm. In terms of biological role, modulates transcription in response to changes in cellular NADH/NAD(+) redox state. The sequence is that of Redox-sensing transcriptional repressor Rex from Lactiplantibacillus plantarum (strain ATCC BAA-793 / NCIMB 8826 / WCFS1) (Lactobacillus plantarum).